A 116-amino-acid chain; its full sequence is Ribosome-binding factor A (116 aa).

Belongs to the RbfA family. Monomer. Binds 30S ribosomal subunits, but not 50S ribosomal subunits or 70S ribosomes.

The protein localises to the cytoplasm. In terms of biological role, one of several proteins that assist in the late maturation steps of the functional core of the 30S ribosomal subunit. Associates with free 30S ribosomal subunits (but not with 30S subunits that are part of 70S ribosomes or polysomes). Required for efficient processing of 16S rRNA. May interact with the 5'-terminal helix region of 16S rRNA. The polypeptide is Ribosome-binding factor A (Streptococcus uberis (strain ATCC BAA-854 / 0140J)).